A 397-amino-acid chain; its full sequence is Digeranylgeranylglycerophospholipid reductase (397 aa).

FAD contacts are provided by Ala15, Glu34, Cys45, Gly46, Gly48, Arg101, Ala125, Glu163, Asp284, Gly296, and Ile297. The a 2,3-bis-O-(geranylgeranyl)-sn-glycerol 1-phospholipid site is built by Lys339 and Val375.

The protein belongs to the geranylgeranyl reductase family. DGGGPL reductase subfamily. It depends on FAD as a cofactor.

The enzyme catalyses 2,3-bis-O-(phytanyl)-sn-glycerol 1-phosphate + 8 NADP(+) = 2,3-bis-O-(geranylgeranyl)-sn-glycerol 1-phosphate + 8 NADPH + 8 H(+). The catalysed reaction is 2,3-bis-O-(phytanyl)-sn-glycerol 1-phosphate + 8 NAD(+) = 2,3-bis-O-(geranylgeranyl)-sn-glycerol 1-phosphate + 8 NADH + 8 H(+). It carries out the reaction a 2,3-bis-O-phytanyl-sn-glycerol 1-phospholipid + 8 A = a 2,3-bis-O-(geranylgeranyl)-sn-glycerol 1-phospholipid + 8 AH2. It catalyses the reaction CDP-2,3-bis-O-(geranylgeranyl)-sn-glycerol + 8 AH2 = CDP-2,3-bis-O-(phytanyl)-sn-glycerol + 8 A. The enzyme catalyses archaetidylserine + 8 AH2 = 2,3-bis-O-phytanyl-sn-glycero-3-phospho-L-serine + 8 A. Its pathway is membrane lipid metabolism; glycerophospholipid metabolism. Its function is as follows. Is involved in the reduction of 2,3-digeranylgeranylglycerophospholipids (unsaturated archaeols) into 2,3-diphytanylglycerophospholipids (saturated archaeols) in the biosynthesis of archaeal membrane lipids. Catalyzes the formation of archaetidic acid (2,3-di-O-phytanyl-sn-glyceryl phosphate) from 2,3-di-O-geranylgeranylglyceryl phosphate (DGGGP) via the hydrogenation of each double bond of the isoprenoid chains. Is also probably able to reduce double bonds of geranyl groups in CDP-2,3-bis-O-(geranylgeranyl)-sn-glycerol and archaetidylserine, thus acting at various stages in the biosynthesis of archaeal membrane lipids. The protein is Digeranylgeranylglycerophospholipid reductase of Picrophilus torridus (strain ATCC 700027 / DSM 9790 / JCM 10055 / NBRC 100828 / KAW 2/3).